Consider the following 384-residue polypeptide: Bifunctional enzyme IspD/IspF (384 aa).

The 2-C-methyl-D-erythritol 4-phosphate cytidylyltransferase stretch occupies residues 1 to 226; it reads MAKTVVLVVA…RCLFDGPGEV (226 aa). The tract at residues 227–384 is 2-C-methyl-D-erythritol 2,4-cyclodiphosphate synthase; sequence RSASGYDVHR…QAMASVWLPR (158 aa). A divalent metal cation contacts are provided by aspartate 233 and histidine 235. 4-CDP-2-C-methyl-D-erythritol 2-phosphate-binding positions include 233–235 and 260–261; these read DVH and HS. A divalent metal cation is bound at residue histidine 268. 4-CDP-2-C-methyl-D-erythritol 2-phosphate-binding positions include 282–284, 358–361, phenylalanine 365, and arginine 368; these read DIG and TTTE.

The protein in the N-terminal section; belongs to the IspD/TarI cytidylyltransferase family. IspD subfamily. This sequence in the C-terminal section; belongs to the IspF family. The cofactor is a divalent metal cation.

It carries out the reaction 2-C-methyl-D-erythritol 4-phosphate + CTP + H(+) = 4-CDP-2-C-methyl-D-erythritol + diphosphate. The catalysed reaction is 4-CDP-2-C-methyl-D-erythritol 2-phosphate = 2-C-methyl-D-erythritol 2,4-cyclic diphosphate + CMP. The protein operates within isoprenoid biosynthesis; isopentenyl diphosphate biosynthesis via DXP pathway; isopentenyl diphosphate from 1-deoxy-D-xylulose 5-phosphate: step 2/6. Its pathway is isoprenoid biosynthesis; isopentenyl diphosphate biosynthesis via DXP pathway; isopentenyl diphosphate from 1-deoxy-D-xylulose 5-phosphate: step 4/6. Bifunctional enzyme that catalyzes the formation of 4-diphosphocytidyl-2-C-methyl-D-erythritol from CTP and 2-C-methyl-D-erythritol 4-phosphate (MEP) (IspD), and catalyzes the conversion of 4-diphosphocytidyl-2-C-methyl-D-erythritol 2-phosphate (CDP-ME2P) to 2-C-methyl-D-erythritol 2,4-cyclodiphosphate (ME-CPP) with a corresponding release of cytidine 5-monophosphate (CMP) (IspF). The protein is Bifunctional enzyme IspD/IspF of Paramagnetospirillum magneticum (strain ATCC 700264 / AMB-1) (Magnetospirillum magneticum).